The chain runs to 628 residues: Probable potassium transport system protein Kup (628 aa).

The next 12 membrane-spanning stretches (helical) occupy residues 15 to 35 (FAAE…SPLY), 49 to 69 (FLGG…ILSV), 106 to 126 (WYLL…GVLT), 141 to 161 (ISPE…LAVF), 174 to 194 (FFGP…VYGI), 210 to 230 (IMLM…CFLA), 254 to 274 (LFVA…ILLV), 295 to 315 (LLFL…TGVF), 343 to 363 (IYVG…VLGF), 369 to 389 (LASA…ILFI), 398 to 418 (WPAP…FAFA), and 425 to 445 (IHDG…VMVS).

This sequence belongs to the HAK/KUP transporter (TC 2.A.72) family.

The protein resides in the cell inner membrane. The catalysed reaction is K(+)(in) + H(+)(in) = K(+)(out) + H(+)(out). Its function is as follows. Transport of potassium into the cell. Likely operates as a K(+):H(+) symporter. This Xanthobacter autotrophicus (strain ATCC BAA-1158 / Py2) protein is Probable potassium transport system protein Kup.